Reading from the N-terminus, the 172-residue chain is Ribosome maturation factor RimM (172 aa).

A PRC barrel domain is found at 96 to 168 (DGEFYYHEII…RIDVTVLEGL (73 aa)).

It belongs to the RimM family. Binds ribosomal protein uS19.

Its subcellular location is the cytoplasm. In terms of biological role, an accessory protein needed during the final step in the assembly of 30S ribosomal subunit, possibly for assembly of the head region. Essential for efficient processing of 16S rRNA. May be needed both before and after RbfA during the maturation of 16S rRNA. It has affinity for free ribosomal 30S subunits but not for 70S ribosomes. In Streptococcus mutans serotype c (strain ATCC 700610 / UA159), this protein is Ribosome maturation factor RimM.